Reading from the N-terminus, the 340-residue chain is Probable complex I intermediate-associated protein 30, mitochondrial (340 aa).

This sequence belongs to the CIA30 family.

It localises to the mitochondrion. Its function is as follows. Chaperone protein involved in the assembly of the mitochondrial NADH:ubiquinone oxidoreductase complex (complex I). Required for normal growth and reproduction. The chain is Probable complex I intermediate-associated protein 30, mitochondrial (nuaf-1) from Caenorhabditis briggsae.